Here is a 482-residue protein sequence, read N- to C-terminus: Nuclear transcription factor Y subunit nfya-1 (482 aa).

The tract at residues Met-1–Pro-160 is disordered. Positions Ser-72 to Ala-93 are enriched in polar residues. Residues Ser-94–Pro-110 show a composition bias toward low complexity. Composition is skewed to polar residues over residues His-126–Ile-135 and Val-144–Pro-160. The Subunit association domain (SAD) signature appears at Leu-306 to Gly-329. Positions Gln-336–Thr-361 form a DNA-binding region, NFYA/HAP2-type. The tract at residues His-344 to Ser-414 is disordered. Basic and acidic residues predominate over residues Gly-353–Lys-362. Low complexity predominate over residues Thr-363–Ser-375.

The protein belongs to the NFYA/HAP2 subunit family. Forms a heterotrimeric transcription factor complex (nfya-1-NF-Y complex) composed of nfya-1, nfyb-1 and nfyc-1, which binds to 5'-CCAAT-3' box motif in the promoters of its target genes. Interacts with the nfyb-1 and nfyc-1 dimer; the interaction is required for subsequent binding to the 5'-CCAAT-3' box motif in DNA. Does not interact with either nfyb-1 or nfyc-1 in their monomeric form. Interacts with mes-3. In terms of tissue distribution, expressed in certain parts of the gonads with high expression in fertilized oocytes in the uterus and mature oocytes from the distal to the proximal arm of the gonad, but weak expression in the syncytial ovaries and immature oocytes at the beginning of the proximal arm of the gonad. Highly expressed in the head ganglia neurons and the developing hermaphrodite vulva and male tail. Weakly expressed in most somatic cells. Not expressed in the intestine, the hypodermis, body wall muscle surrounding the pseudocoelomic space, secretory cells in the pharyngeal terminal bulb wall, in the small ganglia surrounding the pharynx and in the neurons running anteriorly to the sensory organs in the head.

The protein resides in the nucleus. Functionally, component of the sequence-specific heterotrimeric transcription factor (nfya-1-NF-Y) which specifically recognizes a 5'-CCAAT-3' box motif found in the promoters of its target genes to regulate their expression and control cellular identity in particular tissue types. In association with the components in the nfya-1-NF-Y complex, represses the expression of the T-box transcription factor tbx-2 throughout larval development, which most likely restricts its expression to certain tissues. May act to repress txb-2 expression in conjunction with tbx-2 itself, which has an autoregulatory role. With the components in this complex, negatively regulates the expression of the homeobox protein egl-5 to spatially restrict its expression in tissues such as the head. May regulate egl-5 expression in association with the mes-2-mes-3-mes-6 complex. The chain is Nuclear transcription factor Y subunit nfya-1 from Caenorhabditis elegans.